Reading from the N-terminus, the 375-residue chain is Proton-coupled zinc antiporter SLC30A8 (375 aa).

Residues 1 to 68 (MKGPEKAYLV…QREQTSAKKK (68 aa)) are Cytoplasmic-facing. Zn(2+)-binding residues include His-46, Cys-47, and His-48. Positions 46–48 (HCH) match the HCH Motif; seals regulatory zinc-binding pocket motif. Residues 69 to 89 (LCIASLICFVFISAEIVGGYI) traverse the membrane as a helical segment. Topologically, residues 90–98 (AGSLAVVTD) are lumenal, vesicle. A helical membrane pass occupies residues 99 to 119 (AAHLLVDLSSFFISLGSLWLS). Positions 101 and 105 each coordinate Zn(2+). The Cytoplasmic segment spans residues 120–135 (SKSSTMRLTFGWYRAE). Residues 136 to 156 (ILGALMSIITIWLVTGVLVYL) traverse the membrane as a helical segment. Residues 157 to 170 (AIERIIRPDYTIDG) are Lumenal, vesicle-facing. Residues 171-191 (TVMLITSACALGANVVLALIL) form a helical membrane-spanning segment. Topologically, residues 192 to 223 (HQSGHGHSHAGGKHEHMASEYKPQTNASIRAA) are cytoplasmic. The chain crosses the membrane as a helical span at residues 224 to 244 (FIHVIGDLFQSISVLISALII). The Zn(2+) site is built by His-226 and Asp-230. Residues 245–251 (YFKPEYK) are Lumenal, vesicle-facing. The chain crosses the membrane as a helical span at residues 252–272 (IADPICTFIFSIFVLITTVTV). Residues 273-375 (LRDLLNILME…ECMFCYEPTQ (103 aa)) lie on the Cytoplasmic side of the membrane. The Zn(2+) site is built by His-307, His-324, His-351, Glu-358, Cys-367, and Cys-370.

It belongs to the cation diffusion facilitator (CDF) transporter (TC 2.A.4) family. SLC30A subfamily. In terms of assembly, homodimer.

Its subcellular location is the cytoplasmic vesicle. The protein localises to the secretory vesicle membrane. The protein resides in the cell membrane. The enzyme catalyses Zn(2+)(in) + 2 H(+)(out) = Zn(2+)(out) + 2 H(+)(in). Functionally, proton-coupled zinc ion antiporter mediating the entry of zinc into the lumen of pancreatic beta cell secretory granules, thereby regulating insulin secretion. In Xenopus laevis (African clawed frog), this protein is Proton-coupled zinc antiporter SLC30A8 (slc30a8).